Consider the following 122-residue polypeptide: Large ribosomal subunit protein uL14 (122 aa).

The protein belongs to the universal ribosomal protein uL14 family. As to quaternary structure, part of the 50S ribosomal subunit. Forms a cluster with proteins L3 and L19. In the 70S ribosome, L14 and L19 interact and together make contacts with the 16S rRNA in bridges B5 and B8.

Binds to 23S rRNA. Forms part of two intersubunit bridges in the 70S ribosome. In Treponema denticola (strain ATCC 35405 / DSM 14222 / CIP 103919 / JCM 8153 / KCTC 15104), this protein is Large ribosomal subunit protein uL14.